The following is a 448-amino-acid chain: Glutamyl-tRNA reductase (448 aa).

Residues 52–55 (TCNR), S105, 110–112 (EDQ), and Q116 contribute to the substrate site. C53 (nucleophile) is an active-site residue. 184 to 189 (GAGEMG) lines the NADP(+) pocket. The interval 406 to 435 (DPDFGGPDQATPPEFTKGMSVEDIPDGMRD) is disordered.

This sequence belongs to the glutamyl-tRNA reductase family. As to quaternary structure, homodimer.

The catalysed reaction is (S)-4-amino-5-oxopentanoate + tRNA(Glu) + NADP(+) = L-glutamyl-tRNA(Glu) + NADPH + H(+). Its pathway is porphyrin-containing compound metabolism; protoporphyrin-IX biosynthesis; 5-aminolevulinate from L-glutamyl-tRNA(Glu): step 1/2. In terms of biological role, catalyzes the NADPH-dependent reduction of glutamyl-tRNA(Glu) to glutamate 1-semialdehyde (GSA). The polypeptide is Glutamyl-tRNA reductase (Haloarcula marismortui (strain ATCC 43049 / DSM 3752 / JCM 8966 / VKM B-1809) (Halobacterium marismortui)).